Consider the following 303-residue polypeptide: ATP phosphoribosyltransferase (303 aa).

Belongs to the ATP phosphoribosyltransferase family. Long subfamily. The cofactor is Mg(2+).

It is found in the cytoplasm. The enzyme catalyses 1-(5-phospho-beta-D-ribosyl)-ATP + diphosphate = 5-phospho-alpha-D-ribose 1-diphosphate + ATP. It functions in the pathway amino-acid biosynthesis; L-histidine biosynthesis; L-histidine from 5-phospho-alpha-D-ribose 1-diphosphate: step 1/9. With respect to regulation, feedback inhibited by histidine. Functionally, catalyzes the condensation of ATP and 5-phosphoribose 1-diphosphate to form N'-(5'-phosphoribosyl)-ATP (PR-ATP). Has a crucial role in the pathway because the rate of histidine biosynthesis seems to be controlled primarily by regulation of HisG enzymatic activity. In Haemophilus influenzae (strain PittEE), this protein is ATP phosphoribosyltransferase.